Here is a 505-residue protein sequence, read N- to C-terminus: MRQQQEADVVALGRKPGLLCVPERFRAMDLPMAAADALFLWAETPTRPLHVGALAVLSQPDNGTGRYLRKVFSAAVARQQVAPWWRRRPHRSLTSLGQWSWRTETEVDLDYHVRLSALPPRAGTAELWALVSELHAGMLDRSRPLWQVDLIEGLPGGRCAVYVKVHHALADGVSVMRLLQRIVTADPHQRQMPTLWEVPAQASVAKHTAPRGSSRPLTLAKGVLGQARGVPGMVRVVADTTWRAAQCRSGPLTLAAPHTPLNEPIAGARSVAGCSFPIERLRQVAEHADATINDVVLAMCGGALRAYLISRGALPGAPLIAMVPVSLRDTAVIDVFGQGPGNKIGTLMCSLATHLASPVERLSAIRASMRDGKAAIAGRSRNQALAMSALGAAPLALAMALGRVPAPLRPPNVTISNVPGPQGALYWNGARLDALYLLSAPVDGAALNITCSGTNEQITFGLTGCRRAVPALSILTDQLAHELELLVGVSEAGPGTRLRRIAGRR.

The active-site Proton acceptor is the His-167.

Belongs to the long-chain O-acyltransferase family.

It catalyses the reaction an acyl-CoA + a 1,2-diacyl-sn-glycerol = a triacyl-sn-glycerol + CoA. It functions in the pathway glycerolipid metabolism; triacylglycerol biosynthesis. In Mycobacterium tuberculosis (strain CDC 1551 / Oshkosh), this protein is Putative diacyglycerol O-acyltransferase MT0919.